The primary structure comprises 216 residues: Ras-related protein Rab-5C (216 aa).

Residues S30, A31, G33, K34, S35, S36, H47, E48, T53, and G79 each contribute to the GTP site. S35 is a binding site for Mg(2+). Short sequence motifs (switch) lie at residues 45 to 57 and 78 to 94; these read QFHEYQESTIGAA and AGQERYHSLAPMYYRGA. T53 serves as a coordination point for Mg(2+). The residue at position 85 (S85) is a Phosphoserine. GTP contacts are provided by N134, K135, D137, A165, and K166. Residues 185–216 are disordered; that stretch reads NEPQNAAGAPGRNRGVDLQENNPASRSQCCSN. The segment covering 203-216 has biased composition (polar residues); that stretch reads QENNPASRSQCCSN. S-geranylgeranyl cysteine attachment occurs at residues C213 and C214.

The protein belongs to the small GTPase superfamily. Rab family. In terms of assembly, interacts with EEA1 and INCA1. Interacts with GDI1, GDI2, CHML and CHM; phosphorylation at Ser-85 disrupts this interaction. Mg(2+) serves as cofactor. Post-translationally, phosphorylation of Ser-85 in the switch II region by LRRK2 prevents the association of RAB regulatory proteins, including CHM, CHML and RAB GDP dissociation inhibitors GDI1 and GDI2.

The protein localises to the cell membrane. It is found in the early endosome membrane. It localises to the melanosome. It catalyses the reaction GTP + H2O = GDP + phosphate + H(+). With respect to regulation, regulated by guanine nucleotide exchange factors (GEFs) which promote the exchange of bound GDP for free GTP. Regulated by GTPase activating proteins (GAPs) which increase the GTP hydrolysis activity. Inhibited by GDP dissociation inhibitors (GDIs). In terms of biological role, the small GTPases Rab are key regulators of intracellular membrane trafficking, from the formation of transport vesicles to their fusion with membranes. Rabs cycle between an inactive GDP-bound form and an active GTP-bound form that is able to recruit to membranes different sets of downstream effectors directly responsible for vesicle formation, movement, tethering and fusion. This chain is Ras-related protein Rab-5C (RAB5C), found in Bos taurus (Bovine).